Consider the following 240-residue polypeptide: Pyridoxine 5'-phosphate synthase (240 aa).

N6 contacts 3-amino-2-oxopropyl phosphate. 8-9 provides a ligand contact to 1-deoxy-D-xylulose 5-phosphate; sequence DH. Position 17 (R17) interacts with 3-amino-2-oxopropyl phosphate. H42 functions as the Proton acceptor in the catalytic mechanism. 2 residues coordinate 1-deoxy-D-xylulose 5-phosphate: R44 and H49. E69 functions as the Proton acceptor in the catalytic mechanism. T99 lines the 1-deoxy-D-xylulose 5-phosphate pocket. The active-site Proton donor is the H193. 3-amino-2-oxopropyl phosphate-binding positions include G194 and 216–217; that span reads GH.

Belongs to the PNP synthase family. In terms of assembly, homooctamer; tetramer of dimers.

The protein resides in the cytoplasm. It carries out the reaction 3-amino-2-oxopropyl phosphate + 1-deoxy-D-xylulose 5-phosphate = pyridoxine 5'-phosphate + phosphate + 2 H2O + H(+). The protein operates within cofactor biosynthesis; pyridoxine 5'-phosphate biosynthesis; pyridoxine 5'-phosphate from D-erythrose 4-phosphate: step 5/5. Functionally, catalyzes the complicated ring closure reaction between the two acyclic compounds 1-deoxy-D-xylulose-5-phosphate (DXP) and 3-amino-2-oxopropyl phosphate (1-amino-acetone-3-phosphate or AAP) to form pyridoxine 5'-phosphate (PNP) and inorganic phosphate. The protein is Pyridoxine 5'-phosphate synthase of Hydrogenobaculum sp. (strain Y04AAS1).